The primary structure comprises 314 residues: uncharacterized protein (314 aa).

An N-terminal signal peptide occupies residues Met1–Ser18. N-linked (GlcNAc...) asparagine glycans are attached at residues Asn43, Asn96, Asn109, Asn116, Asn117, and Asn161. The interval Ser252–Phe314 is disordered. 2 stretches are compositionally biased toward low complexity: residues Lys257–Asn268 and Lys285–Ser296.

The protein resides in the secreted. This is an uncharacterized protein from Dictyostelium discoideum (Social amoeba).